The following is a 329-amino-acid chain: Flotillin-like protein FloA (329 aa).

The next 2 membrane-spanning stretches (helical) occupy residues Ile4–Val24 and Val26–Gly46.

It belongs to the flotillin-like FloA family. In terms of assembly, homooligomerizes.

The protein localises to the cell membrane. The protein resides in the membrane raft. In terms of biological role, found in functional membrane microdomains (FMM) that may be equivalent to eukaryotic membrane rafts. FMMs are highly dynamic and increase in number as cells age. Flotillins are thought to be important factors in membrane fluidity. This Staphylococcus epidermidis (strain ATCC 35984 / DSM 28319 / BCRC 17069 / CCUG 31568 / BM 3577 / RP62A) protein is Flotillin-like protein FloA.